A 95-amino-acid polypeptide reads, in one-letter code: Aspartyl/glutamyl-tRNA(Asn/Gln) amidotransferase subunit C (95 aa).

This sequence belongs to the GatC family. In terms of assembly, heterotrimer of A, B and C subunits.

The catalysed reaction is L-glutamyl-tRNA(Gln) + L-glutamine + ATP + H2O = L-glutaminyl-tRNA(Gln) + L-glutamate + ADP + phosphate + H(+). The enzyme catalyses L-aspartyl-tRNA(Asn) + L-glutamine + ATP + H2O = L-asparaginyl-tRNA(Asn) + L-glutamate + ADP + phosphate + 2 H(+). Functionally, allows the formation of correctly charged Asn-tRNA(Asn) or Gln-tRNA(Gln) through the transamidation of misacylated Asp-tRNA(Asn) or Glu-tRNA(Gln) in organisms which lack either or both of asparaginyl-tRNA or glutaminyl-tRNA synthetases. The reaction takes place in the presence of glutamine and ATP through an activated phospho-Asp-tRNA(Asn) or phospho-Glu-tRNA(Gln). The sequence is that of Aspartyl/glutamyl-tRNA(Asn/Gln) amidotransferase subunit C from Ruegeria sp. (strain TM1040) (Silicibacter sp.).